The chain runs to 315 residues: Porphobilinogen deaminase (315 aa).

Position 251 is an S-(dipyrrolylmethanemethyl)cysteine (cysteine 251).

It belongs to the HMBS family. In terms of assembly, monomer. It depends on dipyrromethane as a cofactor.

The catalysed reaction is 4 porphobilinogen + H2O = hydroxymethylbilane + 4 NH4(+). The protein operates within porphyrin-containing compound metabolism; protoporphyrin-IX biosynthesis; coproporphyrinogen-III from 5-aminolevulinate: step 2/4. Tetrapolymerization of the monopyrrole PBG into the hydroxymethylbilane pre-uroporphyrinogen in several discrete steps. The sequence is that of Porphobilinogen deaminase from Sphingopyxis alaskensis (strain DSM 13593 / LMG 18877 / RB2256) (Sphingomonas alaskensis).